The following is a 384-amino-acid chain: ATP phosphoribosyltransferase regulatory subunit (384 aa).

It belongs to the class-II aminoacyl-tRNA synthetase family. HisZ subfamily. In terms of assembly, heteromultimer composed of HisG and HisZ subunits.

It is found in the cytoplasm. The protein operates within amino-acid biosynthesis; L-histidine biosynthesis; L-histidine from 5-phospho-alpha-D-ribose 1-diphosphate: step 1/9. In terms of biological role, required for the first step of histidine biosynthesis. May allow the feedback regulation of ATP phosphoribosyltransferase activity by histidine. The protein is ATP phosphoribosyltransferase regulatory subunit of Azoarcus sp. (strain BH72).